Here is a 231-residue protein sequence, read N- to C-terminus: Lipoprotein-releasing system ATP-binding protein LolD 2 (231 aa).

The ABC transporter domain maps to 6–230 (VEARSLSKSF…DGRLVGQDPA (225 aa)). 42-49 (GPSGSGKS) contacts ATP.

Belongs to the ABC transporter superfamily. Lipoprotein translocase (TC 3.A.1.125) family. In terms of assembly, the complex is composed of two ATP-binding proteins (LolD) and two transmembrane proteins (LolC and LolE).

It localises to the cell inner membrane. Functionally, part of the ABC transporter complex LolCDE involved in the translocation of mature outer membrane-directed lipoproteins, from the inner membrane to the periplasmic chaperone, LolA. Responsible for the formation of the LolA-lipoprotein complex in an ATP-dependent manner. The sequence is that of Lipoprotein-releasing system ATP-binding protein LolD 2 from Rhodospirillum rubrum (strain ATCC 11170 / ATH 1.1.1 / DSM 467 / LMG 4362 / NCIMB 8255 / S1).